We begin with the raw amino-acid sequence, 225 residues long: tRNA (guanine-N(1)-)-methyltransferase (225 aa).

S-adenosyl-L-methionine-binding positions include glycine 112 and 132–137 (IGDYVL).

Belongs to the RNA methyltransferase TrmD family. Homodimer.

The protein resides in the cytoplasm. The enzyme catalyses guanosine(37) in tRNA + S-adenosyl-L-methionine = N(1)-methylguanosine(37) in tRNA + S-adenosyl-L-homocysteine + H(+). Specifically methylates guanosine-37 in various tRNAs. This chain is tRNA (guanine-N(1)-)-methyltransferase, found in Flavobacterium psychrophilum (strain ATCC 49511 / DSM 21280 / CIP 103535 / JIP02/86).